A 153-amino-acid chain; its full sequence is Nucleoside diphosphate kinase (153 aa).

ATP contacts are provided by lysine 13, phenylalanine 61, arginine 89, threonine 95, arginine 106, and asparagine 116. Catalysis depends on histidine 119, which acts as the Pros-phosphohistidine intermediate.

This sequence belongs to the NDK family. The cofactor is Mg(2+).

It localises to the cytoplasm. The protein resides in the cell membrane. The enzyme catalyses a 2'-deoxyribonucleoside 5'-diphosphate + ATP = a 2'-deoxyribonucleoside 5'-triphosphate + ADP. The catalysed reaction is a ribonucleoside 5'-diphosphate + ATP = a ribonucleoside 5'-triphosphate + ADP. Functionally, major role in the synthesis of nucleoside triphosphates other than ATP. The ATP gamma phosphate is transferred to the NDP beta phosphate via a ping-pong mechanism, using a phosphorylated active-site intermediate. In Gallus gallus (Chicken), this protein is Nucleoside diphosphate kinase.